The primary structure comprises 544 residues: uncharacterized protein (544 aa).

The first 22 residues, 1-22, serve as a signal peptide directing secretion; it reads MYFSQNAIILVMLMFVISAVFY.

This is an uncharacterized protein from Methanocaldococcus jannaschii (strain ATCC 43067 / DSM 2661 / JAL-1 / JCM 10045 / NBRC 100440) (Methanococcus jannaschii).